The sequence spans 238 residues: Urease subunit alpha (238 aa).

The urease gamma stretch occupies residues 1 to 102 (MKLTPKELDK…LVTVHTPIES (102 aa)). The segment at 103–238 (KGKLVPGELF…DDNYVKTIKE (136 aa)) is urease beta.

The protein in the N-terminal section; belongs to the urease gamma subunit family. In the C-terminal section; belongs to the urease beta subunit family. As to quaternary structure, heterohexamer of 3 UreA (alpha) and 3 UreB (beta) subunits.

The protein localises to the cytoplasm. It carries out the reaction urea + 2 H2O + H(+) = hydrogencarbonate + 2 NH4(+). The protein operates within nitrogen metabolism; urea degradation; CO(2) and NH(3) from urea (urease route): step 1/1. This Helicobacter acinonychis (strain Sheeba) protein is Urease subunit alpha.